The following is a 412-amino-acid chain: Multifunctional CCA protein (412 aa).

Positions 8 and 11 each coordinate ATP. Residues glycine 8 and arginine 11 each coordinate CTP. Mg(2+)-binding residues include aspartate 21 and aspartate 23. The ATP site is built by arginine 91, arginine 137, and arginine 140. 3 residues coordinate CTP: arginine 91, arginine 137, and arginine 140. The HD domain maps to 228 to 329 (TGIHTLMTLS…VKLFDSIDAW (102 aa)).

The protein belongs to the tRNA nucleotidyltransferase/poly(A) polymerase family. Bacterial CCA-adding enzyme type 1 subfamily. In terms of assembly, monomer. Can also form homodimers and oligomers. The cofactor is Mg(2+). Requires Ni(2+) as cofactor.

The enzyme catalyses a tRNA precursor + 2 CTP + ATP = a tRNA with a 3' CCA end + 3 diphosphate. It carries out the reaction a tRNA with a 3' CCA end + 2 CTP + ATP = a tRNA with a 3' CCACCA end + 3 diphosphate. Catalyzes the addition and repair of the essential 3'-terminal CCA sequence in tRNAs without using a nucleic acid template. Adds these three nucleotides in the order of C, C, and A to the tRNA nucleotide-73, using CTP and ATP as substrates and producing inorganic pyrophosphate. tRNA 3'-terminal CCA addition is required both for tRNA processing and repair. Also involved in tRNA surveillance by mediating tandem CCA addition to generate a CCACCA at the 3' terminus of unstable tRNAs. While stable tRNAs receive only 3'-terminal CCA, unstable tRNAs are marked with CCACCA and rapidly degraded. The protein is Multifunctional CCA protein of Escherichia coli O6:K15:H31 (strain 536 / UPEC).